Consider the following 511-residue polypeptide: Mannosyl-oligosaccharide alpha-1,2-mannosidase (511 aa).

The N-terminal stretch at 1 to 35 (MRLPVSFPLTVLSLLGSTIAHPYGETEAVLRSEPK) is a signal peptide. N-linked (GlcNAc...) asparagine glycosylation occurs at asparagine 182. Cysteine 332 and cysteine 361 are disulfide-bonded. A glycan (N-linked (GlcNAc...) asparagine) is linked at asparagine 366. Aspartate 375 functions as the Proton donor in the catalytic mechanism. An N-linked (GlcNAc...) asparagine glycan is attached at asparagine 438. A Ca(2+)-binding site is contributed by threonine 501.

It belongs to the glycosyl hydrolase 47 family. In terms of assembly, homodimer. It depends on Ca(2+) as a cofactor.

The protein resides in the secreted. It carries out the reaction N(4)-(alpha-D-Man-(1-&gt;2)-alpha-D-Man-(1-&gt;2)-alpha-D-Man-(1-&gt;3)-[alpha-D-Man-(1-&gt;2)-alpha-D-Man-(1-&gt;3)-[alpha-D-Man-(1-&gt;2)-alpha-D-Man-(1-&gt;6)]-alpha-D-Man-(1-&gt;6)]-beta-D-Man-(1-&gt;4)-beta-D-GlcNAc-(1-&gt;4)-beta-D-GlcNAc)-L-asparaginyl-[protein] (N-glucan mannose isomer 9A1,2,3B1,2,3) + 4 H2O = N(4)-(alpha-D-Man-(1-&gt;3)-[alpha-D-Man-(1-&gt;3)-[alpha-D-Man-(1-&gt;6)]-alpha-D-Man-(1-&gt;6)]-beta-D-Man-(1-&gt;4)-beta-D-GlcNAc-(1-&gt;4)-beta-D-GlcNAc)-L-asparaginyl-[protein] (N-glucan mannose isomer 5A1,2) + 4 beta-D-mannose. It catalyses the reaction N(4)-(alpha-D-Man-(1-&gt;2)-alpha-D-Man-(1-&gt;2)-alpha-D-Man-(1-&gt;3)-[alpha-D-Man-(1-&gt;3)-[alpha-D-Man-(1-&gt;2)-alpha-D-Man-(1-&gt;6)]-alpha-D-Man-(1-&gt;6)]-beta-D-Man-(1-&gt;4)-beta-D-GlcNAc-(1-&gt;4)-beta-D-GlcNAc)-L-asparaginyl-[protein] (N-glucan mannose isomer 8A1,2,3B1,3) + 3 H2O = N(4)-(alpha-D-Man-(1-&gt;3)-[alpha-D-Man-(1-&gt;3)-[alpha-D-Man-(1-&gt;6)]-alpha-D-Man-(1-&gt;6)]-beta-D-Man-(1-&gt;4)-beta-D-GlcNAc-(1-&gt;4)-beta-D-GlcNAc)-L-asparaginyl-[protein] (N-glucan mannose isomer 5A1,2) + 3 beta-D-mannose. It functions in the pathway protein modification; protein glycosylation. Involved in the maturation of Asn-linked oligosaccharides. Progressively trim alpha-1,2-linked mannose residues from Man(9)GlcNAc(2) to produce Man(5)GlcNAc(2). The sequence is that of Mannosyl-oligosaccharide alpha-1,2-mannosidase (MSDC) from Penicillium citrinum.